The sequence spans 154 residues: Vimentin (154 aa).

Over residues 1 to 13 (MSTRSVSSSSYRR) the composition is skewed to low complexity. Residues 1–31 (MSTRSVSSSSYRRMFGGPGTASRPSSTRSYV) are disordered. Serine 2 is subject to N-acetylserine. Residues 2–95 (STRSVSSSSY…FSLADAINTE (94 aa)) form a head region. Serine 5 is modified (phosphoserine). Serine 7 bears the Phosphoserine; by PKA and PKC; alternate mark. An O-linked (GlcNAc) serine; alternate glycan is attached at serine 7. Serine 8 carries the post-translational modification Phosphoserine. Residues serine 9 and serine 10 each carry the phosphoserine; by PKC modification. A Phosphothreonine modification is found at threonine 20. Serine 25 carries the phosphoserine; by PKA and PKC modification. Serine 26 carries the phosphoserine; by PKC modification. Threonine 33 carries an O-linked (GlcNAc) threonine glycan. A glycan (O-linked (GlcNAc) serine; alternate) is linked at serine 34. Serine 34 carries the phosphoserine; by PKC; alternate modification. Serine 39 carries the post-translational modification Phosphoserine; by CaMK2, PKA, PKC and ROCK2. At serine 42 the chain carries Phosphoserine; by PKC. A Phosphoserine modification is found at serine 49. Residue tyrosine 53 is modified to Phosphotyrosine. A Phosphoserine modification is found at serine 55. A Phosphoserine; by CDK5 and CDK1 modification is found at serine 56. Tyrosine 61 bears the Phosphotyrosine mark. Phosphoserine; by PKA and PKC is present on serine 66. Residue serine 72 is modified to Phosphoserine; by AURKB and ROCK2. Phosphoserine; by CaMK2 is present on serine 83. Serine 87 carries the post-translational modification Phosphoserine. The tract at residues 96 to 131 (FKNTRTNEKVELQELNDRFANYIDKVRFLEQQNKIL) is coil 1A. A coiled-coil region spans residues 96 to 131 (FKNTRTNEKVELQELNDRFANYIDKVRFLEQQNKIL). The IF rod domain maps to 103-154 (EKVELQELNDRFANYIDKVRFLEQQNKILLAELEQLKGQGKSRLGHLYEEEM). Residue lysine 104 forms a Glycyl lysine isopeptide (Lys-Gly) (interchain with G-Cter in SUMO2) linkage. Residue tyrosine 117 is modified to Phosphotyrosine. 3 positions are modified to N6-acetyllysine; alternate: lysine 120, lysine 129, and lysine 139. An N6-succinyllysine; alternate mark is found at lysine 120 and lysine 129. Glycyl lysine isopeptide (Lys-Gly) (interchain with G-Cter in SUMO2); alternate cross-links involve residues lysine 120, lysine 129, and lysine 139. The interval 132–153 (LAELEQLKGQGKSRLGHLYEEE) is linker 1. Serine 144 carries the phosphoserine modification. Methionine 154 is a region of interest (coil 1B).

Belongs to the intermediate filament family. In terms of assembly, homomer assembled from elementary dimers. Identified in complexes that contain VIM, EZR, AHNAK, BFSP1, BFSP2, ANK2, PLEC, PRX and spectrin. Interacts with BCAS3. Interacts with LGSN. Interacts with SYNM. Interacts (via rod region) with PLEC (via CH 1 domain). Interacts with STK33. Interacts with LARP6. Interacts with RAB8B. Interacts with TOR1A; the interaction associates TOR1A with the cytoskeleton. Interacts with TOR1AIP1. Interacts with TOR1AIP1. Interacts with DIAPH1. Interacts with EPPK1; interaction is dependent of higher-order structure of intermediate filament. Interacts with the non-receptor tyrosine kinase SRMS; the interaction leads to phosphorylation of VIM. Interacts with NOD2. Interacts (via head region) with CORO1C. Interacts with HDGF. Interacts with PRKCE (via phorbol-ester/DAG-type 2 domain). Interacts with BFSP2. Interacts with PPL. Interacts with PKP1 and PKP2. Interacts with SCRIB (via PDZ domains); the interaction protects SCRIB from proteasomal degradation and facilitates SCRIB localization to intermediate filaments, the interaction is reduced by cell contact inhibition. In terms of processing, one of the most prominent phosphoproteins in various cells of mesenchymal origin. Phosphorylation is enhanced during cell division, at which time vimentin filaments are significantly reorganized. Phosphorylation by PKN1 inhibits the formation of filaments. Filament disassembly during mitosis is promoted by phosphorylation at Ser-55 as well as by nestin. Phosphorylated at Ser-56 by CDK5 during neutrophil secretion in the cytoplasm. Phosphorylated by STK33. Phosphorylated on tyrosine residues by SRMS.

The protein resides in the cytoplasm. It is found in the cytoskeleton. It localises to the nucleus matrix. The protein localises to the cell membrane. Functionally, vimentins are class-III intermediate filaments found in various non-epithelial cells, especially mesenchymal cells. Vimentin is attached to the nucleus, endoplasmic reticulum, and mitochondria, either laterally or terminally. Plays a role in cell directional movement, orientation, cell sheet organization and Golgi complex polarization at the cell migration front. Protects SCRIB from proteasomal degradation and facilitates its localization to intermediate filaments in a cell contact-mediated manner. Involved with LARP6 in the stabilization of type I collagen mRNAs for CO1A1 and CO1A2. The chain is Vimentin (VIM) from Ovis aries (Sheep).